The following is a 101-amino-acid chain: Small ribosomal subunit protein uS14 (101 aa).

Residues 50–70 (SLPRDSSPSRQRKRCRQTGRP) are disordered. The span at 59 to 68 (RQRKRCRQTG) shows a compositional bias: basic residues.

Belongs to the universal ribosomal protein uS14 family. Part of the 30S ribosomal subunit. Contacts proteins S3 and S10.

Binds 16S rRNA, required for the assembly of 30S particles and may also be responsible for determining the conformation of the 16S rRNA at the A site. This chain is Small ribosomal subunit protein uS14, found in Erwinia tasmaniensis (strain DSM 17950 / CFBP 7177 / CIP 109463 / NCPPB 4357 / Et1/99).